We begin with the raw amino-acid sequence, 268 residues long: Tryptophan synthase alpha chain (268 aa).

Active-site proton acceptor residues include Glu49 and Asp60.

The protein belongs to the TrpA family. As to quaternary structure, tetramer of two alpha and two beta chains.

It carries out the reaction (1S,2R)-1-C-(indol-3-yl)glycerol 3-phosphate + L-serine = D-glyceraldehyde 3-phosphate + L-tryptophan + H2O. The protein operates within amino-acid biosynthesis; L-tryptophan biosynthesis; L-tryptophan from chorismate: step 5/5. The alpha subunit is responsible for the aldol cleavage of indoleglycerol phosphate to indole and glyceraldehyde 3-phosphate. The sequence is that of Tryptophan synthase alpha chain from Shigella sonnei (strain Ss046).